Consider the following 145-residue polypeptide: Mitochondrial import receptor subunit TOM20 homolog (145 aa).

The Mitochondrial intermembrane segment spans residues 1–6; it reads MVGRNS. A helical transmembrane segment spans residues 7–24; sequence AIAAGVCGALFIGYCIYF. The Cytoplasmic segment spans residues 25 to 145; sequence DRKRRSDPNF…AQSLAEDDVE (121 aa). Glycyl lysine isopeptide (Lys-Gly) (interchain with G-Cter in ubiquitin) cross-links involve residues Lys35, Lys56, Lys61, and Lys68. 2 positions are modified to phosphoserine: Ser135 and Ser138.

This sequence belongs to the Tom20 family. As to quaternary structure, forms part of the preprotein translocase complex of the outer mitochondrial membrane (TOM complex) which consists of at least 7 different proteins (TOMM5, TOMM6, TOMM7, TOMM20, TOMM22, TOMM40 and TOMM70). Interacts with TOM22. Interacts with APEX1. Interacts with TBC1D21. Upon mitochondrial depolarization, interacts with PINK1; the interaction is required for PINK1-TOM-TIM23 supercomplex formation which is critical for PINK1 stabilization at the outer mitochondrial membrane, kinase activation and downstream mitophagy. In terms of processing, ubiquitinated by PRKN during mitophagy, leading to its degradation and enhancement of mitophagy. Deubiquitinated by USP30.

The protein resides in the mitochondrion outer membrane. In terms of biological role, central component of the receptor complex responsible for the recognition and translocation of cytosolically synthesized mitochondrial preproteins. Together with TOM22 functions as the transit peptide receptor at the surface of the mitochondrion outer membrane and facilitates the movement of preproteins into the TOM40 translocation pore. Required for the translocation across the mitochondrial outer membrane of cytochrome P450 monooxygenases. This is Mitochondrial import receptor subunit TOM20 homolog (TOMM20) from Bos taurus (Bovine).